Consider the following 376-residue polypeptide: N-acetyldiaminopimelate deacetylase (376 aa).

Residue aspartate 69 is part of the active site. Glutamate 128 serves as the catalytic Proton acceptor.

This sequence belongs to the peptidase M20A family. N-acetyldiaminopimelate deacetylase subfamily.

The enzyme catalyses N-acetyl-(2S,6S)-2,6-diaminopimelate + H2O = (2S,6S)-2,6-diaminopimelate + acetate. The protein operates within amino-acid biosynthesis; L-lysine biosynthesis via DAP pathway; LL-2,6-diaminopimelate from (S)-tetrahydrodipicolinate (acetylase route): step 3/3. Its function is as follows. Catalyzes the conversion of N-acetyl-diaminopimelate to diaminopimelate and acetate. The protein is N-acetyldiaminopimelate deacetylase of Streptococcus pneumoniae serotype 19F (strain G54).